The sequence spans 251 residues: Probable transcriptional regulatory protein jk1057 (251 aa).

The segment at 1–22 is disordered; it reads MAGHSKWATTKHKKAANDAKRG.

The protein belongs to the TACO1 family.

The protein localises to the cytoplasm. The chain is Probable transcriptional regulatory protein jk1057 from Corynebacterium jeikeium (strain K411).